A 742-amino-acid chain; its full sequence is Polyribonucleotide nucleotidyltransferase (742 aa).

Mg(2+) is bound by residues Asp-515 and Asp-521. A KH domain is found at 581 to 640 (PRIITITIPVDKIGEVIGPKGKIINQIQDDTGASISIEDDGTIYIGATNGEAAEAAKNAV). In terms of domain architecture, S1 motif spans 652-724 (GERYLGTVVK…DRGKLSLVPV (73 aa)).

The protein belongs to the polyribonucleotide nucleotidyltransferase family. Mg(2+) is required as a cofactor.

The protein resides in the cytoplasm. It catalyses the reaction RNA(n+1) + phosphate = RNA(n) + a ribonucleoside 5'-diphosphate. Functionally, involved in mRNA degradation. Catalyzes the phosphorolysis of single-stranded polyribonucleotides processively in the 3'- to 5'-direction. The protein is Polyribonucleotide nucleotidyltransferase of Nocardioides sp. (strain ATCC BAA-499 / JS614).